Consider the following 374-residue polypeptide: Succinyl-diaminopimelate desuccinylase (374 aa).

His66 provides a ligand contact to Zn(2+). Asp68 is an active-site residue. Residue Asp99 coordinates Zn(2+). Catalysis depends on Glu133, which acts as the Proton acceptor. The Zn(2+) site is built by Glu134, Glu162, and His348.

It belongs to the peptidase M20A family. DapE subfamily. Homodimer. It depends on Zn(2+) as a cofactor. Requires Co(2+) as cofactor.

The enzyme catalyses N-succinyl-(2S,6S)-2,6-diaminopimelate + H2O = (2S,6S)-2,6-diaminopimelate + succinate. Its pathway is amino-acid biosynthesis; L-lysine biosynthesis via DAP pathway; LL-2,6-diaminopimelate from (S)-tetrahydrodipicolinate (succinylase route): step 3/3. In terms of biological role, catalyzes the hydrolysis of N-succinyl-L,L-diaminopimelic acid (SDAP), forming succinate and LL-2,6-diaminopimelate (DAP), an intermediate involved in the bacterial biosynthesis of lysine and meso-diaminopimelic acid, an essential component of bacterial cell walls. The sequence is that of Succinyl-diaminopimelate desuccinylase from Coxiella burnetii (strain CbuK_Q154) (Coxiella burnetii (strain Q154)).